The chain runs to 723 residues: Protein Hook homolog (723 aa).

A Calponin-homology (CH) domain is found at threonine 4–alanine 120. Coiled-coil stretches lie at residues valine 162 to glutamine 423 and glutamate 457 to alanine 665. The interval leucine 682 to asparagine 723 is disordered. Residues alanine 696–threonine 711 show a composition bias toward low complexity.

Belongs to the hook family. As to quaternary structure, interacts with microtubules.

It is found in the cytoplasm. The protein localises to the cytoskeleton. In terms of biological role, may function to promote vesicle trafficking and/or fusion. May act to link a number of membrane-bound organelles to the cytoskeleton. The protein is Protein Hook homolog of Branchiostoma floridae (Florida lancelet).